A 378-amino-acid polypeptide reads, in one-letter code: Sperm microtubule associated protein 2 (378 aa).

Disordered stretches follow at residues M1–S35 and W47–V79. A compositionally biased stretch (polar residues) spans W47–E56. Residues D61 to P77 are compositionally biased toward acidic residues. 7 THEG repeats span residues A113 to N132, T179 to F198, S217 to R236, A253 to P272, P285 to L304, V321 to R340, and A355 to I374. S290 carries the phosphoserine modification.

As to quaternary structure, interacts with CCT5.

The protein resides in the nucleus. May be involved (but not essential) in spermatogenesis. This Rattus norvegicus (Rat) protein is Sperm microtubule associated protein 2.